Here is a 456-residue protein sequence, read N- to C-terminus: MNSNPKKKFLKLIKIKSDIILLIPIFLFLVCCKSGDFSLLSSPINREKNGTEIVKFSIHPYKGTVIRLGEEILPFKVLEMDKNIALVEMAIPVYKDEKEIELKLSSPGFQNSSYRIRKPEELNEKLIALDKEGITHRFISRFKTGFQPKSVRFIDNTRLAIPLLEDEGMDVLDINSGQTVRLSPPEKYKKKLGFVETISIPEHNELWVSQMQANAVHVFDLKTLAYKATVDLTGKWSKILLYDPIRDLVYCSNWISEDISVIDRKTKLEIRKTDKIGLPRGLLLSKDGKELYIAQFSASNQESGGGRLGIYSMDKEKLIDTIGPPGNKRHIVSGNTENKIYVSDMCCSKIEVYDLKEKKVQKSIPVFDKPNTIALSPDGKYLYVSCRGPNHPTEGYLKKGLVLGKVYVIDTTTDTVKEFWEAGNQPTGLDVSPDNRYLVISDFLDHQIRVYRRDGF.

The N-terminal stretch at 1–34 is a signal peptide; the sequence is MNSNPKKKFLKLIKIKSDIILLIPIFLFLVCCKS. C346 and C347 form a disulfide bridge.

The protein localises to the cell outer membrane. Its function is as follows. May be involved in virulence. Binds human plasminogen (PLG) and stimulates its proteolytic cleavage to enzymatically active plasmin in the presence of an urokinase-type PLG activator in vitro. Activated plasmin has proteolytic activity which may help the bacteria to spread throughout the host by degrading extracellular matrix components, facilitating tissue penetration and invasion. The sequence is that of Antigen Lp49 from Leptospira interrogans serogroup Icterohaemorrhagiae serovar copenhageni (strain Fiocruz L1-130).